A 262-amino-acid chain; its full sequence is Apolipoprotein A-I-1 (262 aa).

A signal peptide spans methionine 1–alanine 18. Residues valine 32–lysine 63 form a 3 X approximate tandem repeats region. Repeat copies occupy residues methionine 64 to alanine 85 and tyrosine 87 to methionine 107. The 10 X approximate tandem repeats stretch occupies residues methionine 64–alanine 262. The stretch at lysine 108–glutamate 118 is one 3; half-length repeat. 5 consecutive repeat copies span residues proline 119–glutamate 140, proline 141–glutamate 162, proline 163–methionine 184, proline 185–alanine 206, and proline 207–serine 228. One copy of the 9; half-length repeat lies at proline 229–glycine 239. Residues proline 240 to alanine 262 form repeat 10.

It belongs to the apolipoprotein A1/A4/E family.

Its subcellular location is the secreted. Participates in the reverse transport of cholesterol from tissues to the liver for excretion by promoting cholesterol efflux from tissues and by acting as a cofactor for the lecithin cholesterol acyltransferase (LCAT). In Oncorhynchus mykiss (Rainbow trout), this protein is Apolipoprotein A-I-1.